A 347-amino-acid polypeptide reads, in one-letter code: MTTTTSGAPASLGRNELPPHLDENLLTPRFYTTEFEKAAKTDLEIARKDFEAMFKEMEADYNLKHFDRKASLERLDELSPEDKAVYESYLVRSVVSEFSGFLLFKEISNRFKKAGRQELGQFFTFLARDEARHAGFLGRALKTEGINVDLPNLPKKRAATFFPLSWVLYSLYLSEKIGYWRYILINRHLKANPDKVCAPLFDFFEPWCQDENRHGDCINLMMRCWPGMTKGFRGKLLSRFFLWTVFLTHTLTVCERGEFYELLGIDPVLFDEEVIIQTNNTSKNAFPWVYKFEDGKFLSMRIDILNAFKKWRNQNGIKKPLALGKFVLLILKQFTLPMEKTDAVRYG.

This sequence belongs to the AcsF family. It depends on Fe cation as a cofactor.

The enzyme catalyses Mg-protoporphyrin IX 13-monomethyl ester + 3 NADPH + 3 O2 + 2 H(+) = 3,8-divinyl protochlorophyllide a + 3 NADP(+) + 5 H2O. It participates in porphyrin-containing compound metabolism; chlorophyll biosynthesis (light-independent). Its function is as follows. Catalyzes the formation of the isocyclic ring in chlorophyll biosynthesis. Mediates the cyclase reaction, which results in the formation of divinylprotochlorophyllide (Pchlide) characteristic of all chlorophylls from magnesium-protoporphyrin IX 13-monomethyl ester (MgPMME). In Prochlorococcus marinus (strain SARG / CCMP1375 / SS120), this protein is Magnesium-protoporphyrin IX monomethyl ester [oxidative] cyclase.